The following is a 71-amino-acid chain: Sec-independent protein translocase protein TatA (71 aa).

A helical membrane pass occupies residues 1 to 21 (MGSFSIWHWLIVLVVVLLLFG). Positions 47–71 (AEEAKTVEHRTDEPVGEVKQKASKS) are disordered. Basic and acidic residues predominate over residues 49–71 (EAKTVEHRTDEPVGEVKQKASKS).

The protein belongs to the TatA/E family. In terms of assembly, the Tat system comprises two distinct complexes: a TatABC complex, containing multiple copies of TatA, TatB and TatC subunits, and a separate TatA complex, containing only TatA subunits. Substrates initially bind to the TatABC complex, which probably triggers association of the separate TatA complex to form the active translocon.

It localises to the cell inner membrane. Its function is as follows. Part of the twin-arginine translocation (Tat) system that transports large folded proteins containing a characteristic twin-arginine motif in their signal peptide across membranes. TatA could form the protein-conducting channel of the Tat system. The chain is Sec-independent protein translocase protein TatA from Chelativorans sp. (strain BNC1).